Here is a 419-residue protein sequence, read N- to C-terminus: Acyl-coenzyme A thioesterase 6 (419 aa).

Active-site charge relay system residues include Ser-232, Asp-324, and His-358. The Peroxisome targeting signal signature appears at Ser-417–Leu-419.

The protein belongs to the C/M/P thioester hydrolase family. Highly expressed in white adipose tissue. Detected at lower levels in kidney, liver, brown adipose tissue and brain.

It localises to the peroxisome. The enzyme catalyses pristanoyl-CoA + H2O = 2,6,10,14-tetramethylpentadecanoate + CoA + H(+). It catalyses the reaction phytanoyl-CoA + H2O = 3,7,11,15-tetramethylhexadecanoate + CoA + H(+). It functions in the pathway lipid metabolism; fatty acid metabolism. Its function is as follows. Catalyzes the hydrolysis of acyl-CoAs into free fatty acids and coenzyme A (CoASH), regulating their respective intracellular levels. Catalyzes the hydrolysis of phytanoyl-CoA and pristanoyl-CoA, two methyl-branched fatty acids derived from phytol, that enter the body via the diet. In Mus musculus (Mouse), this protein is Acyl-coenzyme A thioesterase 6.